A 323-amino-acid polypeptide reads, in one-letter code: Dof zinc finger protein DOF3.6 (323 aa).

The Dof-type zinc finger occupies 76–130 (LNCPRCDSTNTKFCYFNNYSLTQPRHFCKTCRRYWTRGGSLRNVPVGGGFRRNKR). The Zn(2+) site is built by Cys78, Cys81, Cys103, and Cys106. Disordered stretches follow at residues 121–160 (VGGGFRRNKRSKSRSKSTVVVSTDNTTSTSSLTSRPSYSN) and 304–323 (GGNSSWTGFTSNNSTGHLSF). Residues 126–135 (RRNKRSKSRS) show a composition bias toward basic residues. Low complexity predominate over residues 136 to 159 (KSTVVVSTDNTTSTSSLTSRPSYS).

Interacts with OBF4. In terms of tissue distribution, predominantly expressed in roots.

It is found in the nucleus. Functionally, transcription factor that binds specifically to a 5'-AA[AG]G-3' consensus core sequence. Enhances the DNA binding of OBF transcription factors to OCS elements. The sequence is that of Dof zinc finger protein DOF3.6 (DOF3.6) from Arabidopsis thaliana (Mouse-ear cress).